Reading from the N-terminus, the 708-residue chain is MARKTPLKRYRNIGISAHIDAGKTTTTERVLFYTGVSHKIGEVHDGAATMDWMEQEQERGITITSAATTCFWSGMAKQFDEHRINIIDTPGHVDFTIEVERSMRVLDGACMVYCAVGGVQPQSETVWRQANKYKVPRLAFINKMDRVGADFYRVVEQIKTRLGGKPVPLVIPIGKEDDFEGVVDLVTMKAIYWDEASQGMEYDEREIPAELQEKAEEYREYLVESAAEATEELMNEYLENGELTVDQINSAIRQLTIDNEIIPLLCGTAFKNKGVQKMLDAVIQYLPAPMDVPAIKGILDDKDESEGTREASDEAPFSALAFKIMNDKFVGNLTFVRVYSGVLKQGSSVYNPVKMKRERVGRIVQMMANSQEELQEIRTGDIAALVGMKDVTTGDTLCDEQNVITLERMEFPDPVISLAVEPKTKADQEKMSIALGRLAKEDPSFRVHTDEESGQTIISGMGELHLEILVDRMKREFGVEANIGAPQVAYRETIRNTVEQEGKFVRQTGGRGKFGHVWLRLEPMDPAGDVLYEFKEEVVGGTVPKEFHGAVDKGIQERMKNGVLAGYPIVGVKATLYDGSYHDVDSDELSFKMAGSIAFRKGFMAANPTLLEPVMKVEVETPEDYMGDIMGDLNRRRGMVQGMEDLPGGTKQIRAEVPLAEMFGYATQMRSMSQGRATYSMEFQKYAEIPKSVAEAIISKFNNKDDDE.

The tr-type G domain occupies 8–290 (KRYRNIGISA…AVIQYLPAPM (283 aa)). GTP is bound by residues 17 to 24 (AHIDAGKT), 88 to 92 (DTPGH), and 142 to 145 (NKMD).

It belongs to the TRAFAC class translation factor GTPase superfamily. Classic translation factor GTPase family. EF-G/EF-2 subfamily.

It localises to the cytoplasm. Its function is as follows. Catalyzes the GTP-dependent ribosomal translocation step during translation elongation. During this step, the ribosome changes from the pre-translocational (PRE) to the post-translocational (POST) state as the newly formed A-site-bound peptidyl-tRNA and P-site-bound deacylated tRNA move to the P and E sites, respectively. Catalyzes the coordinated movement of the two tRNA molecules, the mRNA and conformational changes in the ribosome. The sequence is that of Elongation factor G from Psychrobacter cryohalolentis (strain ATCC BAA-1226 / DSM 17306 / VKM B-2378 / K5).